Reading from the N-terminus, the 2485-residue chain is Tyrosine-protein phosphatase non-receptor type 13 (2485 aa).

The region spanning Val3–Ser190 is the KIND domain. The interval Leu186–Leu220 is disordered. The span at Gln192–Arg205 shows a compositional bias: basic and acidic residues. Residue Ser240 is modified to Phosphoserine. The interval Ser260–Glu283 is disordered. Polar residues predominate over residues Asn270–Thr279. Residues Ser301 and Ser302 each carry the phosphoserine modification. Positions Arg433–Thr467 are disordered. Polar residues predominate over residues Thr452–Tyr465. Residues Phe469 to Tyr504 are a coiled coil. One can recognise an FERM domain in the interval Arg572–Arg872. Ser890, Ser897, Ser908, Ser911, and Ser914 each carry phosphoserine. Disordered regions lie at residues Gln947–Gln975 and Thr995–Pro1049. Residues Ser950–His971 are compositionally biased toward basic and acidic residues. Over residues Lys1020–Arg1032 the composition is skewed to polar residues. 3 positions are modified to phosphoserine: Ser1029, Ser1033, and Ser1085. Basic and acidic residues predominate over residues Ser1033 to Asp1042. In terms of domain architecture, PDZ 1 spans Leu1093–Pro1178. Disordered regions lie at residues His1227 to Gln1258 and Thr1273 to Lys1362. Polar residues-rich tracts occupy residues Ser1243–Gln1258, Thr1273–Ser1288, and Thr1327–Ser1359. 2 consecutive PDZ domains span residues Glu1368–Gly1452 and Glu1501–Pro1588. Polar residues predominate over residues Ala1608 to Ser1630. Disordered regions lie at residues Ala1608 to Thr1665 and Pro1715 to Asp1751. The span at Gln1736–Ser1749 shows a compositional bias: low complexity. PDZ domains lie at Leu1788 to Val1868 and Pro1882 to Asn1965. Residues Pro1971–Ser1996 form a disordered region. Positions Ser1973 to Ser1996 are enriched in polar residues. The 255-residue stretch at Pro2213–Val2467 folds into the Tyrosine-protein phosphatase domain. Residues Asp2378, Cys2408–Arg2414, and Gln2452 contribute to the substrate site. Cys2408 (phosphocysteine intermediate) is an active-site residue. Residues Cys2408 to Arg2414 are substrate.

Belongs to the protein-tyrosine phosphatase family. Non-receptor class subfamily. Interacts (via the first PDZ domain) with PLEKHA1 and PLEKHA2. Interacts (via the second PDZ domain) with TNFRSF6 (Fas receptor) (via C-terminus). Interacts (via the second PDZ domain) with TRIP6 (via the third LIM domain and C-terminus). Interacts (via the third PDZ domain) with NGFR (via C-terminal SVP motif) and PKN2 (via C-terminus). Interacts (via the second or fourth PDZ domains) with PDLIM4 (via C-terminus only or via combined C-terminus and LIM domain, but not LIM domain only). Found in a complex with PDLIM4 and TRIP6. Interacts with PDLIM4; this interaction results in dephosphorylation of SRC 'Tyr-419' by this protein leading to its inactivation. Interacts with BRD7. Interacts with RAPGEF6. Interacts with ARHGAP29. Interacts with PIK3R2; dephosphorylates PIK3R2. Interacts with FBXL2. Interacts (via the FERM domain) with ENTR1. Found in a complex with ENTR1, PTPN13 and GIT1. Expressed in keratinocytes (at protein level). Present in most tissues with the exception of the liver and skeletal muscle. Most abundant in lung, kidney and fetal brain.

The protein resides in the cytoplasm. It localises to the cytoskeleton. Its subcellular location is the nucleus. It is found in the cell projection. The protein localises to the lamellipodium. The enzyme catalyses O-phospho-L-tyrosyl-[protein] + H2O = L-tyrosyl-[protein] + phosphate. Tyrosine phosphatase which negatively regulates FAS-induced apoptosis and NGFR-mediated pro-apoptotic signaling. May regulate phosphoinositide 3-kinase (PI3K) signaling through dephosphorylation of PIK3R2. This Homo sapiens (Human) protein is Tyrosine-protein phosphatase non-receptor type 13 (PTPN13).